The primary structure comprises 127 residues: Small ribosomal subunit protein uS11 (127 aa).

It belongs to the universal ribosomal protein uS11 family. Part of the 30S ribosomal subunit. Interacts with proteins S7 and S18. Binds to IF-3.

Located on the platform of the 30S subunit, it bridges several disparate RNA helices of the 16S rRNA. Forms part of the Shine-Dalgarno cleft in the 70S ribosome. This chain is Small ribosomal subunit protein uS11, found in Rickettsia felis (strain ATCC VR-1525 / URRWXCal2) (Rickettsia azadi).